The chain runs to 139 residues: D-ribose pyranase (139 aa).

The Proton donor role is filled by His-20. Substrate-binding positions include Asp-28, His-106, and 128-130; that span reads YAN.

This sequence belongs to the RbsD / FucU family. RbsD subfamily. Homodecamer.

The protein localises to the cytoplasm. The catalysed reaction is beta-D-ribopyranose = beta-D-ribofuranose. The protein operates within carbohydrate metabolism; D-ribose degradation; D-ribose 5-phosphate from beta-D-ribopyranose: step 1/2. Functionally, catalyzes the interconversion of beta-pyran and beta-furan forms of D-ribose. The polypeptide is D-ribose pyranase (Salmonella choleraesuis (strain SC-B67)).